Consider the following 395-residue polypeptide: Acetate kinase 1 (395 aa).

Position 8 (N8) interacts with Mg(2+). K15 is an ATP binding site. Residue R89 coordinates substrate. The active-site Proton donor/acceptor is the D146. Residues H206–G210, D283–R285, and G330–N334 contribute to the ATP site. Residue E382 participates in Mg(2+) binding.

It belongs to the acetokinase family. Homodimer. The cofactor is Mg(2+). Mn(2+) serves as cofactor.

The protein localises to the cytoplasm. The catalysed reaction is acetate + ATP = acetyl phosphate + ADP. It participates in metabolic intermediate biosynthesis; acetyl-CoA biosynthesis; acetyl-CoA from acetate: step 1/2. Its function is as follows. Catalyzes the formation of acetyl phosphate from acetate and ATP. Can also catalyze the reverse reaction. This Lactococcus lactis subsp. lactis (strain IL1403) (Streptococcus lactis) protein is Acetate kinase 1.